Here is a 185-residue protein sequence, read N- to C-terminus: F-box protein At1g61340 (185 aa).

Residues 78-126 (SRELEDLPLDILVRIICGVEHEDLKQLFHVSKTIREATMIAKQSHFAYS) enclose the F-box domain.

This chain is F-box protein At1g61340, found in Arabidopsis thaliana (Mouse-ear cress).